The chain runs to 706 residues: SPX domain-containing membrane protein Os09g0521800 (706 aa).

The region spanning 2–145 is the SPX domain; sequence VNFSNKLTKD…GYKFTDYYVR (144 aa). The next 6 membrane-spanning stretches (helical) occupy residues 251–271, 281–301, 318–338, 340–359, 378–398, and 414–434; these read MSLV…YIVV, LGAA…AQVF, LLFS…AFDL, SLTI…ARAV, AAFV…AGLL, and LPGW…WILF. The disordered stretch occupies residues 475 to 498; that stretch reads SEQDEEDDNGDEEHNETLSSSTTT. Positions 476–488 are enriched in acidic residues; that stretch reads EQDEEDDNGDEEH. 5 helical membrane-spanning segments follow: residues 520 to 540, 554 to 574, 583 to 603, 611 to 631, and 678 to 698; these read LLIY…SSVV, VFLA…GTYI, ILVA…KLTV, VCSA…NLSL, and LLNA…AATL.

This sequence belongs to the major facilitator superfamily.

The protein localises to the membrane. In Oryza sativa subsp. japonica (Rice), this protein is SPX domain-containing membrane protein Os09g0521800.